The chain runs to 286 residues: ATP synthase gamma chain (286 aa).

The protein belongs to the ATPase gamma chain family. As to quaternary structure, F-type ATPases have 2 components, CF(1) - the catalytic core - and CF(0) - the membrane proton channel. CF(1) has five subunits: alpha(3), beta(3), gamma(1), delta(1), epsilon(1). CF(0) has three main subunits: a, b and c.

The protein localises to the cell inner membrane. Its function is as follows. Produces ATP from ADP in the presence of a proton gradient across the membrane. The gamma chain is believed to be important in regulating ATPase activity and the flow of protons through the CF(0) complex. This is ATP synthase gamma chain from Alteromonas mediterranea (strain DSM 17117 / CIP 110805 / LMG 28347 / Deep ecotype).